The following is a 988-amino-acid chain: Transposase for transposon Tn501 (988 aa).

It belongs to the transposase 7 family.

Required for transposition of transposon Tn501. The protein is Transposase for transposon Tn501 (tnpA) of Pseudomonas aeruginosa.